A 419-amino-acid chain; its full sequence is UDP-N-acetylglucosamine 1-carboxyvinyltransferase (419 aa).

22–23 (KN) is a phosphoenolpyruvate binding site. A UDP-N-acetyl-alpha-D-glucosamine-binding site is contributed by Arg-92. Cys-116 functions as the Proton donor in the catalytic mechanism. Cys-116 carries the post-translational modification 2-(S-cysteinyl)pyruvic acid O-phosphothioketal. UDP-N-acetyl-alpha-D-glucosamine-binding positions include 121–125 (RPIDL), Asp-306, and Ile-328.

The protein belongs to the EPSP synthase family. MurA subfamily.

It localises to the cytoplasm. It catalyses the reaction phosphoenolpyruvate + UDP-N-acetyl-alpha-D-glucosamine = UDP-N-acetyl-3-O-(1-carboxyvinyl)-alpha-D-glucosamine + phosphate. It participates in cell wall biogenesis; peptidoglycan biosynthesis. Its function is as follows. Cell wall formation. Adds enolpyruvyl to UDP-N-acetylglucosamine. Target for the antibiotic fosfomycin. This is UDP-N-acetylglucosamine 1-carboxyvinyltransferase from Streptococcus pneumoniae (strain Hungary19A-6).